We begin with the raw amino-acid sequence, 215 residues long: Lysozyme-like protein 5 (215 aa).

The first 17 residues, 1 to 17, serve as a signal peptide directing secretion; it reads MKHFFITILLFCSVVSA. The Ch-type lysozyme domain maps to 18–215; the sequence is ARNGIDINSP…GVSVDMNYIP (198 aa). Active-site residues include aspartate 23, aspartate 113, and glutamate 115.

Belongs to the glycosyl hydrolase 25 family.

Its function is as follows. Plays a role in resistance to Gram-positive bacteria S.aureus or B.thuringiensis infection. In Caenorhabditis elegans, this protein is Lysozyme-like protein 5.